Reading from the N-terminus, the 162-residue chain is Caveolin-2 (162 aa).

Residues Met1 to Lys86 lie on the Cytoplasmic side of the membrane. Tyr19 carries the phosphotyrosine; by SRC modification. Phosphoserine occurs at positions 20 and 23. Tyr27 carries the phosphotyrosine; by SRC modification. The helical intramembrane region spans Phe87–Leu107. The Cytoplasmic segment spans residues Ser108 to Asp162.

Belongs to the caveolin family. Monomer or homodimer. Interacts with CAV1; the interaction forms a stable heterooligomeric complex that is required for targeting to lipid rafts and for caveolae formation. Tyrosine phosphorylated forms do not form heterooligomers with the Tyr-19-phosphorylated form existing as a monomer or dimer, and the Tyr-27-form as a monomer only. Interacts (tyrosine phosphorylated form) with the SH2 domain-containing proteins, RASA1, NCK1 and SRC. Interacts (tyrosine phosphorylated form) with INSR, the interaction (Tyr-27-phosphorylated form) is increased on insulin stimulation. Interacts (Tyr-19 phosphorylated form) with MAPK1 (phosphorylated form); the interaction, promoted by insulin, leads to nuclear location and MAPK1 activation. Interacts with STAT3; the interaction is increased on insulin-induced tyrosine phosphorylation leading to STAT activation. Post-translationally, phosphorylated on serine and tyrosine residues. CAV1 promotes phosphorylation on Ser-23 which then targets the complex to the plasma membrane, lipid rafts and caveolae. Phosphorylation on both Tyr-19 and Tyr-27 is required for insulin-induced 'Ser-727' phosphorylation of STAT3 and its activation. Phosphorylation on Tyr-19 is required for insulin-induced phosphorylation of MAPK1 and DNA binding of STAT3. Tyrosine phosphorylation is induced by both EGF and insulin. In terms of tissue distribution, expressed in aortic endothelial cells.

Its subcellular location is the nucleus. It localises to the cytoplasm. The protein resides in the golgi apparatus membrane. The protein localises to the cell membrane. It is found in the membrane. Its subcellular location is the caveola. Its function is as follows. May act as a scaffolding protein within caveolar membranes. Interacts directly with G-protein alpha subunits and can functionally regulate their activity. Acts as an accessory protein in conjunction with CAV1 in targeting to lipid rafts and driving caveolae formation. Positive regulator of cellular mitogenesis of the MAPK signaling pathway. Required for the insulin-stimulated nuclear translocation and activation of MAPK1 and STAT3, and the subsequent regulation of cell cycle progression. The sequence is that of Caveolin-2 (CAV2) from Bos taurus (Bovine).